Consider the following 248-residue polypeptide: Pyridoxine 5'-phosphate synthase (248 aa).

Asn-11 lines the 3-amino-2-oxopropyl phosphate pocket. Asp-13–His-14 contributes to the 1-deoxy-D-xylulose 5-phosphate binding site. A 3-amino-2-oxopropyl phosphate-binding site is contributed by Arg-22. His-47 acts as the Proton acceptor in catalysis. Residues Arg-49 and His-54 each coordinate 1-deoxy-D-xylulose 5-phosphate. Glu-74 serves as the catalytic Proton acceptor. Position 104 (Thr-104) interacts with 1-deoxy-D-xylulose 5-phosphate. Residue His-198 is the Proton donor of the active site. Residues Gly-199 and Gly-220–His-221 contribute to the 3-amino-2-oxopropyl phosphate site.

The protein belongs to the PNP synthase family. As to quaternary structure, homooctamer; tetramer of dimers.

The protein localises to the cytoplasm. The catalysed reaction is 3-amino-2-oxopropyl phosphate + 1-deoxy-D-xylulose 5-phosphate = pyridoxine 5'-phosphate + phosphate + 2 H2O + H(+). Its pathway is cofactor biosynthesis; pyridoxine 5'-phosphate biosynthesis; pyridoxine 5'-phosphate from D-erythrose 4-phosphate: step 5/5. Its function is as follows. Catalyzes the complicated ring closure reaction between the two acyclic compounds 1-deoxy-D-xylulose-5-phosphate (DXP) and 3-amino-2-oxopropyl phosphate (1-amino-acetone-3-phosphate or AAP) to form pyridoxine 5'-phosphate (PNP) and inorganic phosphate. The polypeptide is Pyridoxine 5'-phosphate synthase (Ruegeria pomeroyi (strain ATCC 700808 / DSM 15171 / DSS-3) (Silicibacter pomeroyi)).